The following is a 216-amino-acid chain: Somatotropin (216 aa).

An N-terminal signal peptide occupies residues 1 to 25 (MAPGSWFSPLLIAVVTLGLPQGAAA). His-45 contacts Zn(2+). Residues Cys-78 and Cys-189 are joined by a disulfide bond. Residue Glu-198 participates in Zn(2+) binding. A disulfide bridge connects residues Cys-206 and Cys-214.

Belongs to the somatotropin/prolactin family. As to expression, pituitary gland.

It localises to the secreted. In terms of biological role, growth hormone plays an important role in growth control. The protein is Somatotropin (GH) of Meleagris gallopavo (Wild turkey).